Consider the following 737-residue polypeptide: Glycogen [starch] synthase, muscle (737 aa).

Serine 8 is modified (phosphoserine; by AMPK and PKA). At serine 11 the chain carries Phosphoserine. Lysine 39 contacts UDP. Positions 205 and 211 each coordinate UDP-alpha-D-glucose. Residues histidine 291, glutamate 292, glutamine 294, histidine 297, and lysine 301 each contribute to the alpha-D-glucose 6-phosphate site. Arginine 331 contacts UDP. Position 331 (arginine 331) interacts with UDP-alpha-D-glucose. Phosphoserine is present on serine 412. Histidine 501 provides a ligand contact to alpha-D-glucose 6-phosphate. UDP-alpha-D-glucose contacts are provided by glutamate 510, tryptophan 512, and glycine 513. Threonine 515 contributes to the UDP binding site. 2 residues coordinate alpha-D-glucose 6-phosphate: arginine 582 and arginine 586. The segment at 634 to 737 is disordered; it reads YRYPRPASVP…PTSSLGEERN (104 aa). A Phosphoserine; by DYRK2, GSK3-alpha, GSK3-beta and PASK modification is found at serine 641. A phosphoserine; by GSK3-alpha and GSK3-beta mark is found at serine 645 and serine 649. Residue serine 652 is modified to Phosphoserine. Phosphoserine; by GSK3-alpha and GSK3-beta is present on serine 653. Serine 657 is modified (phosphoserine; by CK2). Residues 658–681 are compositionally biased toward acidic residues; the sequence is EDEEDPRNGPLEEDSERYDEDEEA. Serine 672 carries the phosphoserine modification. Positions 682–695 are enriched in basic and acidic residues; that stretch reads AKDRRNIRAPEWPR. The residue at position 698 (serine 698) is a Phosphoserine. Polar residues predominate over residues 698–714; the sequence is SCTSSTSGSKRNSVDTA. At threonine 700 the chain carries Phosphothreonine. Serine 710 is subject to Phosphoserine. Over residues 715-737 the composition is skewed to low complexity; sequence TSSSLSTPSEPLSPTSSLGEERN. Threonine 721 is modified (phosphothreonine). Phosphoserine occurs at positions 727 and 731.

This sequence belongs to the glycosyltransferase 3 family. Part of the GYS1-GYG1 complex, a heterooctamer composed of a tetramer of GYS1 and 2 dimers of GYG1, where each GYS1 protomer binds to one GYG1 subunit (via GYG1 C-terminus); the GYS1 tetramer may dissociate from GYG1 dimers to continue glycogen polymerization on its own. Post-translationally, phosphorylation at Ser-8 by AMPK inactivates the enzyme activity. Primed phosphorylation at Ser-657 (site 5) by CSNK2A1 and CSNK2A2 is required for inhibitory phosphorylation at Ser-641 (site 3a), Ser-645 (site 3b), Ser-649 (site 3c) and Ser-653 (site 4) by GSK3A an GSK3B. Phosphorylated at Ser-641 by PASK, leading to inactivation; phosphorylation by PASK is inhibited by glycogen. Phosphorylated at Ser-641 by DYRK2, leading to inactivation. Dephosphorylation at Ser-641 and Ser-645 by PP1 activates the enzyme.

It catalyses the reaction [(1-&gt;4)-alpha-D-glucosyl](n) + UDP-alpha-D-glucose = [(1-&gt;4)-alpha-D-glucosyl](n+1) + UDP + H(+). It participates in glycan biosynthesis; glycogen biosynthesis. With respect to regulation, allosteric activation by glucose-6-phosphate. Phosphorylation reduces the activity towards UDP-glucose. When in the non-phosphorylated state, glycogen synthase does not require glucose-6-phosphate as an allosteric activator; when phosphorylated it does. Functionally, glycogen synthase participates in the glycogen biosynthetic process along with glycogenin and glycogen branching enzyme. Extends the primer composed of a few glucose units formed by glycogenin by adding new glucose units to it. In this context, glycogen synthase transfers the glycosyl residue from UDP-Glc to the non-reducing end of alpha-1,4-glucan. The polypeptide is Glycogen [starch] synthase, muscle (GYS1) (Macaca mulatta (Rhesus macaque)).